The primary structure comprises 353 residues: Alternative oxidase, mitochondrial (353 aa).

Residues 25–45 (FRSTDDEDENNPSTELATDTT) form a disordered region. The segment covering 35 to 45 (NPSTELATDTT) has biased composition (polar residues). The chain crosses the membrane as a helical span at residues 153–173 (FLFLESIAGVPGMVAGMIRHL). Residues Glu157, Glu196, and His199 each coordinate Fe cation. The chain crosses the membrane as a helical span at residues 217–237 (LLIGQIIFYNLFFISYLISPA). Positions 247, 301, and 304 each coordinate Fe cation.

It belongs to the alternative oxidase family. It depends on Fe cation as a cofactor.

Its subcellular location is the mitochondrion inner membrane. In terms of biological role, catalyzes cyanide-resistant oxygen consumption. May increase respiration when the cytochrome respiratory pathway is restricted, or in response to low temperatures. This Yarrowia lipolytica (strain CLIB 122 / E 150) (Yeast) protein is Alternative oxidase, mitochondrial (AOX).